Reading from the N-terminus, the 314-residue chain is Pyridoxal 5'-phosphate synthase-like subunit PDX1.2 (314 aa).

A2 carries the N-acetylalanine modification.

Belongs to the PdxS/SNZ family. In terms of assembly, homodimer or heterodimer with PDX1.1 or PDX1.3. No interaction with PDX2. In terms of tissue distribution, expressed in callus tissues, flowers and roots. Weakly expressed in leaves and stems.

The protein resides in the cytoplasm. Functionally, the protein has no function in the formation of pyridoxal 5'-phosphate. The protein is Pyridoxal 5'-phosphate synthase-like subunit PDX1.2 (PDX12) of Arabidopsis thaliana (Mouse-ear cress).